The sequence spans 818 residues: Adhesion G protein-coupled receptor E5 (818 aa).

The first 23 residues, 1–23 (MRGVRCPGLLVVCILLSLSGAGT), serve as a signal peptide directing secretion. Residues 24-533 (QKAESKNCAK…VQDPRLELIT (510 aa)) are Extracellular-facing. The 42-residue stretch at 27-68 (ESKNCAKWCPINSKCVSNRSCVCKPGFSSEKELITNPAESCE) folds into the EGF-like 1 domain. Disulfide bonds link cysteine 31-cysteine 41, cysteine 35-cysteine 47, cysteine 49-cysteine 67, cysteine 73-cysteine 86, cysteine 80-cysteine 95, cysteine 97-cysteine 118, cysteine 169-cysteine 182, cysteine 176-cysteine 191, cysteine 193-cysteine 212, cysteine 218-cysteine 231, cysteine 225-cysteine 240, and cysteine 242-cysteine 260. N-linked (GlcNAc...) asparagine glycosylation occurs at asparagine 44. The EGF-like 2; calcium-binding domain maps to 69-119 (DINECLLPGFSCGDFAMCKNSEGSYTCVCNLGYKLLSGAESFVNESENTCQ). Asparagine 112 carries an N-linked (GlcNAc...) asparagine glycan. The 49-residue stretch at 165 to 213 (DVNECISGQNHCHQSTHCINKLGGYSCICRQGWKPVPGSPNGPVSTVCE) folds into the EGF-like 3; calcium-binding domain. The region spanning 214-261 (DVDECSSGQHQCHNSTVCKNTVGSYKCHCRPGWKPTSGSLRGPDTICQ) is the EGF-like 4; calcium-binding domain. Residue asparagine 227 is glycosylated (N-linked (GlcNAc...) asparagine). Residues asparagine 299 and asparagine 395 are each glycosylated (N-linked (GlcNAc...) asparagine). The region spanning 347–525 (PFTYTSPSNT…AILMAQYHVQ (179 aa)) is the GAIN-B domain. Phosphoserine is present on serine 425. N-linked (GlcNAc...) asparagine glycans are attached at residues asparagine 461 and asparagine 502. Intrachain disulfides connect cysteine 482/cysteine 507 and cysteine 499/cysteine 509. A GPS region spans residues 482–525 (CAFWKAHNGNGYWDTDGCSMNGTGFCHCNHLTSFAILMAQYHVQ). A helical membrane pass occupies residues 534-554 (KVGLLLSLICLLLCILTFLLV). Over 555–562 (KPIQSSRT) the chain is Cytoplasmic. The helical transmembrane segment at 563-583 (MVHLHLCICLFLGSIIFLVGV) threads the bilayer. The Extracellular segment spans residues 584 to 602 (ENEGGEVGLRCRLVAMMLH). Residues 603–623 (FCFLAAFCWMALEGVELYFLV) form a helical membrane-spanning segment. Residues 624–637 (VRVFQGQGLSTWQR) lie on the Cytoplasmic side of the membrane. A helical membrane pass occupies residues 638 to 658 (CLIGYGVPLLIVAISMAVVKM). Residues 659–679 (DGYGHATYCWLDFRKQGFLWS) are Extracellular-facing. The helical transmembrane segment at 680 to 700 (FSGPVAFIIFCNAAIFVITVW) threads the bilayer. The Cytoplasmic portion of the chain corresponds to 701 to 723 (KLTKKFSEINPNMKKLRKARVLT). The chain crosses the membrane as a helical span at residues 724–744 (ITAIAQLLVLGCTWGFGLFLF). The Extracellular segment spans residues 745 to 752 (NPHSTWLS). Residues 753–773 (YIFTLLNCLQGLFLYVMLCLL) traverse the membrane as a helical segment. Residues 774–818 (NKKVREEYWKWACMVTGSKYTEFNSSTTGTGTSQTRALRSSESGM) lie on the Cytoplasmic side of the membrane. Serine 798 is modified (phosphoserine). Positions 799 to 808 (STTGTGTSQT) are enriched in low complexity. The interval 799-818 (STTGTGTSQTRALRSSESGM) is disordered. Threonine 808 is subject to Phosphothreonine. The span at 809 to 818 (RALRSSESGM) shows a compositional bias: polar residues. 2 positions are modified to phosphoserine: serine 814 and serine 816.

This sequence belongs to the G-protein coupled receptor 2 family. LN-TM7 subfamily. As to quaternary structure, forms a heterodimer, consisting of a large extracellular region (alpha subunit) non-covalently linked to a seven-transmembrane moiety (beta subunit). Interacts with complement decay-accelerating factor (DAF). The largest isoform (isoform 1) do not interact with DAF. Also interacts with chondroitin sulfate. Post-translationally, proteolytically cleaved into 2 subunits, an extracellular alpha subunit and a seven-transmembrane subunit. In terms of tissue distribution, although predominantly expressed by cells of the immune system, expressed ubiquitously with particularly high levels of expression in the lung and the thymus gland. In the spleen, expression is detected on most myeloid cells and variable portions of T-cells, B-cells and NK cells. In the bone marrow, expressed in nearly all myeloid cells, whereas little if any expression is found on erythroid cells.

The protein resides in the cell membrane. Its subcellular location is the secreted. It is found in the extracellular space. Functionally, receptor potentially involved in both adhesion and signaling processes early after leukocyte activation. Plays an essential role in leukocyte migration. The sequence is that of Adhesion G protein-coupled receptor E5 from Mus musculus (Mouse).